The following is a 278-amino-acid chain: Probable aquaporin PIP2-8 (278 aa).

N-acetylmethionine is present on M1. Residues 1–36 (MSKEVSEEGRHGKDYVDPPPAPLLDMAELKLWSFYR) lie on the Cytoplasmic side of the membrane. Position 3 is an N6,N6-dimethyllysine (K3). The chain crosses the membrane as a helical span at residues 37 to 57 (AIIAEFIATLLFLYVTVATVI). At 58 to 74 (GHKNQTGPCGGVGLLGI) the chain is on the extracellular side. Residues 75–95 (AWAFGGMIFVLVYCTAGISGG) traverse the membrane as a helical segment. Residues 96–116 (HINPAVTFGLFLARKVSLPRA) lie on the Cytoplasmic side of the membrane. The NPA 1 signature appears at 98-100 (NPA). Residues 117–137 (VAYMVAQCLGAICGVGLVKAF) traverse the membrane as a helical segment. The Extracellular portion of the chain corresponds to 138-158 (MMTPYKRLGGGANTVADGYST). The helical transmembrane segment at 159-179 (GTALGAEIIGTFVLVYTVFSA) threads the bilayer. Residues 180-192 (TDPKRSARDSHVP) are Cytoplasmic-facing. A helical membrane pass occupies residues 193–213 (VLAPLPIGFAVFMVHLATIPI). The Extracellular segment spans residues 214-240 (TGTGINPARSFGAAVIYNNEKAWDDHW). The NPA 2 motif lies at 219–221 (NPA). Residues 241–261 (IFWVGPFVGALAAAAYHQYIL) traverse the membrane as a helical segment. Residues 262–278 (RAAAIKALASFRSNPTN) lie on the Cytoplasmic side of the membrane. S271 and S274 each carry phosphoserine.

Belongs to the MIP/aquaporin (TC 1.A.8) family. PIP (TC 1.A.8.11) subfamily. As to expression, expressed in roots and floral buds.

It localises to the cell membrane. Functionally, aquaporins facilitate the transport of water and small neutral solutes across cell membranes. This chain is Probable aquaporin PIP2-8 (PIP2-8), found in Arabidopsis thaliana (Mouse-ear cress).